The following is an 80-amino-acid chain: uncharacterized protein (80 aa).

Residues 1–15 form the signal peptide; the sequence is MEVIVVIVVIVVVIA. Positions 23 to 44 are enriched in low complexity; the sequence is NSNSNSNNSSDSSNESNNSDSS. Positions 23-52 are disordered; sequence NSNSNSNNSSDSSNESNNSDSSKNGGSDIY. N-linked (GlcNAc...) asparagine glycans are attached at residues Asn-29, Asn-30, Asn-36, Asn-39, and Asn-64.

The protein resides in the secreted. This is an uncharacterized protein from Dictyostelium discoideum (Social amoeba).